We begin with the raw amino-acid sequence, 468 residues long: 3-isopropylmalate dehydratase large subunit (468 aa).

Residues cysteine 345, cysteine 405, and cysteine 408 each contribute to the [4Fe-4S] cluster site.

The protein belongs to the aconitase/IPM isomerase family. LeuC type 1 subfamily. Heterodimer of LeuC and LeuD. The cofactor is [4Fe-4S] cluster.

The enzyme catalyses (2R,3S)-3-isopropylmalate = (2S)-2-isopropylmalate. Its pathway is amino-acid biosynthesis; L-leucine biosynthesis; L-leucine from 3-methyl-2-oxobutanoate: step 2/4. Catalyzes the isomerization between 2-isopropylmalate and 3-isopropylmalate, via the formation of 2-isopropylmaleate. In Oceanobacillus iheyensis (strain DSM 14371 / CIP 107618 / JCM 11309 / KCTC 3954 / HTE831), this protein is 3-isopropylmalate dehydratase large subunit.